Reading from the N-terminus, the 371-residue chain is Putative RNA-binding protein Luc7-like 1 (371 aa).

Coiled coils occupy residues 87–177 (MDHL…RNSM) and 220–256 (QIRE…EERL). Residues 232-257 (VAEKQEKRNQDRLRRREEREREERLG) are compositionally biased toward basic and acidic residues. The disordered stretch occupies residues 232-371 (VAEKQEKRNQ…RSEEKEAGEI (140 aa)). The span at 258-317 (RRSGSRTRDRRRSRSRDRRRRRSRSTSRERRKFSRSRSRDRYRRHRSRSRSHSRGHRRAS) shows a compositional bias: basic residues. Composition is skewed to basic and acidic residues over residues 318 to 351 (RDRS…DWRL) and 361 to 371 (RRSEEKEAGEI). Residues Ser336 and Ser363 each carry the phosphoserine modification.

The protein belongs to the Luc7 family.

Functionally, may bind to RNA via its Arg/Ser-rich domain. This is Putative RNA-binding protein Luc7-like 1 (Luc7l) from Mus musculus (Mouse).